The primary structure comprises 125 residues: MAITKEEIIEAVGSMSVMDLNDLVKAFEEKFGVSAAAMAVVGPAGAGGGDAGGAEQTEFTVNLVEAGANKVSVIKAVREITGLGLKEAKDLVDGAPKPIKEGVDKKTAEEAKKKLEEAGAKAELK.

Residues 95-125 (APKPIKEGVDKKTAEEAKKKLEEAGAKAELK) form a disordered region.

It belongs to the bacterial ribosomal protein bL12 family. In terms of assembly, homodimer. Part of the ribosomal stalk of the 50S ribosomal subunit. Forms a multimeric L10(L12)X complex, where L10 forms an elongated spine to which 2 to 4 L12 dimers bind in a sequential fashion. Binds GTP-bound translation factors.

Functionally, forms part of the ribosomal stalk which helps the ribosome interact with GTP-bound translation factors. Is thus essential for accurate translation. The protein is Large ribosomal subunit protein bL12 of Polynucleobacter necessarius subsp. necessarius (strain STIR1).